The chain runs to 444 residues: Glucoside xylosyltransferase 2 (444 aa).

At 1–4 (MKLR) the chain is on the cytoplasmic side. A helical; Signal-anchor for type II membrane protein transmembrane segment spans residues 5 to 25 (SKAAALLLLALAVLLLALLSL). Over 26–444 (RARRDPEPPG…IIHMGPNPMS (419 aa)) the chain is Lumenal. The segment at 31-101 (PEPPGFPARP…LARRPGETRS (71 aa)) is disordered. Over residues 68–83 (RSPRRQPPRLRPRAGR) the composition is skewed to basic residues. Residues 87 to 101 (ASREKLARRPGETRS) are compositionally biased toward basic and acidic residues. The N-linked (GlcNAc...) asparagine glycan is linked to Asn-275.

This sequence belongs to the glycosyltransferase 8 family.

Its subcellular location is the membrane. The catalysed reaction is 3-O-(beta-D-glucosyl)-L-seryl-[EGF-like domain protein] + UDP-alpha-D-xylose = 3-O-[alpha-D-xylosyl-(1-&gt;3)-beta-D-glucosyl]-L-seryl-[EGF-like domain protein] + UDP + H(+). In terms of biological role, glycosyltransferase which elongates the O-linked glucose attached to EGF-like repeats in the extracellular domain of Notch proteins by catalyzing the addition of xylose. This is Glucoside xylosyltransferase 2 (Gxylt2) from Mus musculus (Mouse).